The chain runs to 434 residues: Tol-Pal system protein TolB (434 aa).

Positions 1 to 28 (MQQTCKRKIWMQISVALVTSLWMISAQA) are cleaved as a signal peptide.

The protein belongs to the TolB family. In terms of assembly, the Tol-Pal system is composed of five core proteins: the inner membrane proteins TolA, TolQ and TolR, the periplasmic protein TolB and the outer membrane protein Pal. They form a network linking the inner and outer membranes and the peptidoglycan layer.

It localises to the periplasm. Functionally, part of the Tol-Pal system, which plays a role in outer membrane invagination during cell division and is important for maintaining outer membrane integrity. In Alcanivorax borkumensis (strain ATCC 700651 / DSM 11573 / NCIMB 13689 / SK2), this protein is Tol-Pal system protein TolB.